Here is a 234-residue protein sequence, read N- to C-terminus: Ribosomal RNA large subunit methyltransferase E (234 aa).

Residues Met-1–Ser-37 form a disordered region. Positions 91, 93, 109, 125, and 149 each coordinate S-adenosyl-L-methionine. Lys-189 serves as the catalytic Proton acceptor.

The protein belongs to the class I-like SAM-binding methyltransferase superfamily. RNA methyltransferase RlmE family.

The protein resides in the cytoplasm. It catalyses the reaction uridine(2552) in 23S rRNA + S-adenosyl-L-methionine = 2'-O-methyluridine(2552) in 23S rRNA + S-adenosyl-L-homocysteine + H(+). Its function is as follows. Specifically methylates the uridine in position 2552 of 23S rRNA at the 2'-O position of the ribose in the fully assembled 50S ribosomal subunit. The sequence is that of Ribosomal RNA large subunit methyltransferase E from Hyphomonas neptunium (strain ATCC 15444).